Consider the following 302-residue polypeptide: 4-hydroxy-tetrahydrodipicolinate synthase (302 aa).

Thr-55 provides a ligand contact to pyruvate. Tyr-144 acts as the Proton donor/acceptor in catalysis. Lys-172 (schiff-base intermediate with substrate) is an active-site residue. Val-214 is a pyruvate binding site.

Belongs to the DapA family. As to quaternary structure, homotetramer; dimer of dimers.

It is found in the cytoplasm. It catalyses the reaction L-aspartate 4-semialdehyde + pyruvate = (2S,4S)-4-hydroxy-2,3,4,5-tetrahydrodipicolinate + H2O + H(+). Its pathway is amino-acid biosynthesis; L-lysine biosynthesis via DAP pathway; (S)-tetrahydrodipicolinate from L-aspartate: step 3/4. Catalyzes the condensation of (S)-aspartate-beta-semialdehyde [(S)-ASA] and pyruvate to 4-hydroxy-tetrahydrodipicolinate (HTPA). The protein is 4-hydroxy-tetrahydrodipicolinate synthase of Synechococcus sp. (strain CC9902).